A 506-amino-acid polypeptide reads, in one-letter code: Maturase K (506 aa).

It belongs to the intron maturase 2 family. MatK subfamily.

The protein localises to the plastid. Its subcellular location is the chloroplast. Its function is as follows. Usually encoded in the trnK tRNA gene intron. Probably assists in splicing its own and other chloroplast group II introns. In Phyllodoce empetriformis (Pink mountainheath), this protein is Maturase K.